We begin with the raw amino-acid sequence, 35 residues long: Photosystem II reaction center protein T (35 aa).

Residues 3-23 form a helical membrane-spanning segment; sequence ALVYTFLLVSTLGIIFFAIFF.

It belongs to the PsbT family. PSII is composed of 1 copy each of membrane proteins PsbA, PsbB, PsbC, PsbD, PsbE, PsbF, PsbH, PsbI, PsbJ, PsbK, PsbL, PsbM, PsbT, PsbY, PsbZ, Psb30/Ycf12, at least 3 peripheral proteins of the oxygen-evolving complex and a large number of cofactors. It forms dimeric complexes.

It localises to the plastid. The protein localises to the chloroplast thylakoid membrane. Its function is as follows. Found at the monomer-monomer interface of the photosystem II (PS II) dimer, plays a role in assembly and dimerization of PSII. PSII is a light-driven water plastoquinone oxidoreductase, using light energy to abstract electrons from H(2)O, generating a proton gradient subsequently used for ATP formation. This Amborella trichopoda protein is Photosystem II reaction center protein T.